The primary structure comprises 335 residues: DNA-directed RNA polymerase subunit alpha (335 aa).

The segment at 1–233 is alpha N-terminal domain (alpha-NTD); the sequence is MTRTANEFLT…QQIAIFVDLQ (233 aa). The interval 247 to 335 is alpha C-terminal domain (alpha-CTD); that stretch reads VDPILLRPVD…MDDRFAYRSR (89 aa).

It belongs to the RNA polymerase alpha chain family. Homodimer. The RNAP catalytic core consists of 2 alpha, 1 beta, 1 beta' and 1 omega subunit. When a sigma factor is associated with the core the holoenzyme is formed, which can initiate transcription.

The enzyme catalyses RNA(n) + a ribonucleoside 5'-triphosphate = RNA(n+1) + diphosphate. Its function is as follows. DNA-dependent RNA polymerase catalyzes the transcription of DNA into RNA using the four ribonucleoside triphosphates as substrates. In Acinetobacter baumannii (strain AB307-0294), this protein is DNA-directed RNA polymerase subunit alpha.